The sequence spans 156 residues: S-ribosylhomocysteine lyase (156 aa).

3 residues coordinate Fe cation: His-56, His-60, and Cys-123.

Belongs to the LuxS family. Homodimer. Fe cation serves as cofactor.

It carries out the reaction S-(5-deoxy-D-ribos-5-yl)-L-homocysteine = (S)-4,5-dihydroxypentane-2,3-dione + L-homocysteine. In terms of biological role, involved in the synthesis of autoinducer 2 (AI-2) which is secreted by bacteria and is used to communicate both the cell density and the metabolic potential of the environment. The regulation of gene expression in response to changes in cell density is called quorum sensing. Catalyzes the transformation of S-ribosylhomocysteine (RHC) to homocysteine (HC) and 4,5-dihydroxy-2,3-pentadione (DPD). This is S-ribosylhomocysteine lyase from Staphylococcus aureus (strain Mu3 / ATCC 700698).